The following is a 1221-amino-acid chain: WEB family protein At4g27595, chloroplastic (1221 aa).

Positions 1 to 68 (MASRTKTGLM…VSDRRTARVP (68 aa)) are disordered. The N-terminal 82 residues, 1–82 (MASRTKTGLM…ANYFLIIICM (82 aa)), are a transit peptide targeting the chloroplast. Residues 32–58 (SDGNSPSPVQSTRLSIDRSPQTVNSKP) show a composition bias toward polar residues. 3 coiled-coil regions span residues 95–149 (TGLL…AAQH), 202–543 (TEEL…FNSK), and 587–1084 (AAKE…GEEI). A compositionally biased stretch (basic and acidic residues) spans 1073–1083 (EASSTHEKGEE). The disordered stretch occupies residues 1073–1221 (EASSTHEKGE…LLKKKSSSQK (149 aa)). Positions 1084 to 1097 (ITNTNPFDNSTGEQ) are enriched in polar residues. 2 stretches are compositionally biased toward basic and acidic residues: residues 1106–1116 (AIDRHLKDDTT) and 1129–1160 (KGEK…TEHD). Residues 1175-1187 (NFDQLSNGLSLAE) are compositionally biased toward polar residues.

Belongs to the WEB family.

The protein localises to the plastid. Its subcellular location is the chloroplast. The polypeptide is WEB family protein At4g27595, chloroplastic (Arabidopsis thaliana (Mouse-ear cress)).